The primary structure comprises 561 residues: Putative cysteine ligase BshC (561 aa).

The stretch at 472–517 (LAQSVEKVMQSTLNQVENLKSKTIKAEKQRHNDLIAQIEKSRDNLL) forms a coiled coil.

This sequence belongs to the BshC family.

The polypeptide is Putative cysteine ligase BshC (Chloroherpeton thalassium (strain ATCC 35110 / GB-78)).